The sequence spans 203 residues: FMN-dependent NADH:quinone oxidoreductase (203 aa).

FMN contacts are provided by residues Ser-9, 15-17, and 138-141; these read SVS and SRGG.

The protein belongs to the azoreductase type 1 family. As to quaternary structure, homodimer. FMN is required as a cofactor.

The enzyme catalyses 2 a quinone + NADH + H(+) = 2 a 1,4-benzosemiquinone + NAD(+). It catalyses the reaction N,N-dimethyl-1,4-phenylenediamine + anthranilate + 2 NAD(+) = 2-(4-dimethylaminophenyl)diazenylbenzoate + 2 NADH + 2 H(+). In terms of biological role, quinone reductase that provides resistance to thiol-specific stress caused by electrophilic quinones. Functionally, also exhibits azoreductase activity. Catalyzes the reductive cleavage of the azo bond in aromatic azo compounds to the corresponding amines. The protein is FMN-dependent NADH:quinone oxidoreductase of Methylorubrum populi (strain ATCC BAA-705 / NCIMB 13946 / BJ001) (Methylobacterium populi).